A 671-amino-acid chain; its full sequence is Autophagy-related protein 22-2 (671 aa).

Polar residues-rich tracts occupy residues Met-1 to Gln-10 and Pro-19 to Phe-34. Positions Met-1 to Glu-67 are disordered. N-linked (GlcNAc...) asparagine glycosylation is found at Asn-5 and Asn-21. The segment covering Glu-39–Val-60 has biased composition (basic and acidic residues). A run of 4 helical transmembrane segments spans residues Tyr-83–Leu-103, Ser-155–Ile-175, Leu-188–Pro-208, and Leu-212–Leu-232. The disordered stretch occupies residues Pro-251–Leu-271. The chain crosses the membrane as a helical span at residues Ile-324–Leu-344. A glycan (N-linked (GlcNAc...) asparagine) is linked at Asn-346. 7 helical membrane passes run Leu-354 to Leu-374, Phe-422 to Val-442, Gly-457 to Ile-477, Ala-491 to Val-511, Trp-523 to Cys-543, Tyr-560 to Val-582, and Ala-591 to Val-611. Residues Glu-634–Ile-671 form a disordered region.

It belongs to the ATG22 family.

The protein resides in the vacuole membrane. Vacuolar effluxer which mediate the efflux of amino acids resulting from autophagic degradation. The release of autophagic amino acids allows the maintenance of protein synthesis and viability during nitrogen starvation. In Sclerotinia sclerotiorum (strain ATCC 18683 / 1980 / Ss-1) (White mold), this protein is Autophagy-related protein 22-2 (atg22-2).